We begin with the raw amino-acid sequence, 106 residues long: Urease subunit beta (106 aa).

Belongs to the urease beta subunit family. In terms of assembly, heterotrimer of UreA (gamma), UreB (beta) and UreC (alpha) subunits. Three heterotrimers associate to form the active enzyme.

Its subcellular location is the cytoplasm. It carries out the reaction urea + 2 H2O + H(+) = hydrogencarbonate + 2 NH4(+). It functions in the pathway nitrogen metabolism; urea degradation; CO(2) and NH(3) from urea (urease route): step 1/1. This is Urease subunit beta from Prochlorococcus marinus (strain MIT 9312).